Reading from the N-terminus, the 740-residue chain is MLKLFSAFRKNKIWDFNGGIHPPEMKTQSNGTPLRQVPLAQRFVIPLKQHIGAEGELCVSVGDKVLRGQPLTRGRGKMLPVHAPTSGTVTAIAPHSTAHPSALAELSVIIDADGEDCWIPRDGWADYRTRSREELIERIHQFGVAGLGGAGFPTGVKLQGGGDKIETLIINAAECEPYITADDRLMQDCAAQVVEGIRILAHILQPREILIGIEDNKPQAISMLRAVLADSNDISLRVIPTKYPSGGAKQLTYILTGKQVPHGGRSSDIGVLMQNVGTAYAVKRAVIDGEPITERVVTLTGEAIARPGNVWARLGTPVRHLLNDAGFCPSADQMVIMGGPLMGFTLPWLDVPVVKITNCLLAPSANELGEPQEEQSCIRCSACADACPADLLPQQLYWFSKGQQHDKATTHNIADCIECGACAWVCPSNIPLVQYFRQEKAEIAAIRQEEKRAAEAKARFEARQARLEREKAARLERHKSAAVQPAAKDKDAIAAALARVKEKQAQATQPIVIKAGERPDNSAIIAAREARKAQARAKQAELQQTNDAATVADPRKTAVEAAIARAKARKLEQQQANAEPEEQVDPRKAAVEAAIARAKARKLEQQQANAEPEEQVDPRKAAVEAAIARAKARKLEQQQTNAEPEEQVDPRKAAVEAAIARAKARKLEQQQANAEPEEQVDPRKAAVEAAIARAKARKLEQQQTNAEPEEQVDPRKAAVAAAIARAQAKKAAQQKVVNED.

2 consecutive 4Fe-4S ferredoxin-type domains span residues Gly-369–Tyr-397 and Lys-407–Phe-436. Residues Cys-377, Cys-380, Cys-383, Cys-387, Cys-416, Cys-419, Cys-422, and Cys-426 each coordinate [4Fe-4S] cluster. The segment at Lys-602–Ala-718 is disordered.

This sequence belongs to the 4Fe4S bacterial-type ferredoxin family. RnfC subfamily. In terms of assembly, the complex is composed of six subunits: RsxA, RsxB, RsxC, RsxD, RsxE and RsxG. The cofactor is [4Fe-4S] cluster.

It localises to the cell inner membrane. Part of a membrane-bound complex that couples electron transfer with translocation of ions across the membrane. Required to maintain the reduced state of SoxR. This chain is Ion-translocating oxidoreductase complex subunit C, found in Shigella sonnei (strain Ss046).